The chain runs to 628 residues: Biosynthetic arginine decarboxylase (628 aa).

Lysine 99 is modified (N6-(pyridoxal phosphate)lysine). 279-289 (VDVGGGLGIDY) lines the substrate pocket.

Belongs to the Orn/Lys/Arg decarboxylase class-II family. SpeA subfamily. Mg(2+) serves as cofactor. Requires pyridoxal 5'-phosphate as cofactor.

The catalysed reaction is L-arginine + H(+) = agmatine + CO2. Its function is as follows. Catalyzes the biosynthesis of agmatine from arginine. In Xanthomonas axonopodis pv. citri (strain 306), this protein is Biosynthetic arginine decarboxylase.